Reading from the N-terminus, the 351-residue chain is Anthranilate phosphoribosyltransferase (351 aa).

Residues G80, 83–84, T88, 90–93, 108–116, and S120 contribute to the 5-phospho-alpha-D-ribose 1-diphosphate site; these read GD, NIST, and KHGNRSVTS. G80 provides a ligand contact to anthranilate. Mg(2+) is bound at residue S92. N111 lines the anthranilate pocket. R166 provides a ligand contact to anthranilate. Mg(2+) contacts are provided by D229 and E230.

This sequence belongs to the anthranilate phosphoribosyltransferase family. In terms of assembly, homodimer. Mg(2+) serves as cofactor.

The catalysed reaction is N-(5-phospho-beta-D-ribosyl)anthranilate + diphosphate = 5-phospho-alpha-D-ribose 1-diphosphate + anthranilate. It participates in amino-acid biosynthesis; L-tryptophan biosynthesis; L-tryptophan from chorismate: step 2/5. In terms of biological role, catalyzes the transfer of the phosphoribosyl group of 5-phosphorylribose-1-pyrophosphate (PRPP) to anthranilate to yield N-(5'-phosphoribosyl)-anthranilate (PRA). The protein is Anthranilate phosphoribosyltransferase of Chlorobium chlorochromatii (strain CaD3).